The chain runs to 187 residues: Probable chorismate pyruvate-lyase (187 aa).

3 residues coordinate substrate: R80, L117, and E176.

Belongs to the UbiC family.

It localises to the cytoplasm. The catalysed reaction is chorismate = 4-hydroxybenzoate + pyruvate. It functions in the pathway cofactor biosynthesis; ubiquinone biosynthesis. Its function is as follows. Removes the pyruvyl group from chorismate, with concomitant aromatization of the ring, to provide 4-hydroxybenzoate (4HB) for the ubiquinone pathway. The polypeptide is Probable chorismate pyruvate-lyase (Halorhodospira halophila (strain DSM 244 / SL1) (Ectothiorhodospira halophila (strain DSM 244 / SL1))).